Here is a 230-residue protein sequence, read N- to C-terminus: Ubiquitin carboxyl-terminal hydrolase isozyme L3 (230 aa).

In terms of domain architecture, UCH catalytic spans 5–229; sequence RWLPLEANPE…LRFNAIALSA (225 aa). The interval 8-13 is interaction with ubiquitin; it reads PLEANP. Cys-95 functions as the Nucleophile in the catalytic mechanism. A Phosphoserine modification is found at Ser-130. The interval 152-159 is interaction with ubiquitin. Crossover loop which restricts access of large ubiquitin adducts to the active site; it reads AHEGQTEA. The active-site Proton donor is the His-169. Residues 219-224 form an interaction with ubiquitin region; it reads ELRFNA.

It belongs to the peptidase C12 family. Preferentially binds diubiquitin; the interaction does not hydrolyze diubiquitin but, in vitro, inhibits the hydrolyzing activity on other substrates. In terms of tissue distribution, highly expressed in heart, skeletal muscle, and testis.

The protein localises to the cytoplasm. It catalyses the reaction Thiol-dependent hydrolysis of ester, thioester, amide, peptide and isopeptide bonds formed by the C-terminal Gly of ubiquitin (a 76-residue protein attached to proteins as an intracellular targeting signal).. With respect to regulation, inhibited by monoubiquitin and diubiquitin. Functionally, deubiquitinating enzyme (DUB) that controls levels of cellular ubiquitin through processing of ubiquitin precursors and ubiquitinated proteins. Thiol protease that recognizes and hydrolyzes a peptide bond at the C-terminal glycine of either ubiquitin or NEDD8. Has a 10-fold preference for Arg and Lys at position P3'', and exhibits a preference towards 'Lys-48'-linked ubiquitin chains. Deubiquitinates ENAC in apical compartments, thereby regulating apical membrane recycling. Indirectly increases the phosphorylation of IGFIR, AKT and FOXO1 and promotes insulin-signaling and insulin-induced adipogenesis. Required for stress-response retinal, skeletal muscle and germ cell maintenance. May be involved in working memory. Can hydrolyze UBB(+1), a mutated form of ubiquitin which is not effectively degraded by the proteasome and is associated with neurogenerative disorders. The sequence is that of Ubiquitin carboxyl-terminal hydrolase isozyme L3 (UCHL3) from Homo sapiens (Human).